The sequence spans 124 residues: Holo-[acyl-carrier-protein] synthase (124 aa).

Mg(2+) contacts are provided by Asp7 and Glu55.

It belongs to the P-Pant transferase superfamily. AcpS family. Mg(2+) is required as a cofactor.

The protein resides in the cytoplasm. It catalyses the reaction apo-[ACP] + CoA = holo-[ACP] + adenosine 3',5'-bisphosphate + H(+). Transfers the 4'-phosphopantetheine moiety from coenzyme A to a Ser of acyl-carrier-protein. The sequence is that of Holo-[acyl-carrier-protein] synthase from Borreliella burgdorferi (strain ATCC 35210 / DSM 4680 / CIP 102532 / B31) (Borrelia burgdorferi).